Here is a 381-residue protein sequence, read N- to C-terminus: Queuine tRNA-ribosyltransferase (381 aa).

Asp96 serves as the catalytic Proton acceptor. Substrate-binding positions include 96 to 100 (DSGGF), Asp150, Gln193, and Gly220. Residues 251–257 (GVGSPDS) are RNA binding. The Nucleophile role is filled by Asp270. The segment at 275–279 (TRIAR) is RNA binding; important for wobble base 34 recognition. The Zn(2+) site is built by Cys308, Cys310, Cys313, and His339.

Belongs to the queuine tRNA-ribosyltransferase family. Homodimer. Within each dimer, one monomer is responsible for RNA recognition and catalysis, while the other monomer binds to the replacement base PreQ1. The cofactor is Zn(2+).

The enzyme catalyses 7-aminomethyl-7-carbaguanine + guanosine(34) in tRNA = 7-aminomethyl-7-carbaguanosine(34) in tRNA + guanine. It participates in tRNA modification; tRNA-queuosine biosynthesis. Functionally, catalyzes the base-exchange of a guanine (G) residue with the queuine precursor 7-aminomethyl-7-deazaguanine (PreQ1) at position 34 (anticodon wobble position) in tRNAs with GU(N) anticodons (tRNA-Asp, -Asn, -His and -Tyr). Catalysis occurs through a double-displacement mechanism. The nucleophile active site attacks the C1' of nucleotide 34 to detach the guanine base from the RNA, forming a covalent enzyme-RNA intermediate. The proton acceptor active site deprotonates the incoming PreQ1, allowing a nucleophilic attack on the C1' of the ribose to form the product. After dissociation, two additional enzymatic reactions on the tRNA convert PreQ1 to queuine (Q), resulting in the hypermodified nucleoside queuosine (7-(((4,5-cis-dihydroxy-2-cyclopenten-1-yl)amino)methyl)-7-deazaguanosine). This is Queuine tRNA-ribosyltransferase from Lysinibacillus sphaericus (strain C3-41).